Consider the following 265-residue polypeptide: MDDLVREELPNGTRRLFARDAQGGEAGFAVIEPGRPGQPAMVEVQVRPEHRSCGLGGRLVRAALDEAGPGAYLWDHENSPASQAIVRRNGLVPVRTLCQMRRWLAYPPLPEPVFPDGVSVRQYQGPQDDEELLRVNNAAFDWHPEQGGWSIEKLRERLAQPWVDPAGIFLARDEQDRLIGFHWTRTHPQTQTEHKLGEVYVLGVDPACHCKGLGKALTLVGLRHLRDQGLAQAKLYVEQTNAPALATYRGLGFTVHAQDVAYVRG.

2 N-acetyltransferase domains span residues 1–110 (MDDL…PPLP) and 118–265 (VSVR…YVRG). D3 provides a ligand contact to 1D-myo-inositol 2-(L-cysteinylamino)-2-deoxy-alpha-D-glucopyranoside. Position 44 to 46 (44 to 46 (VQV)) interacts with acetyl-CoA. 1D-myo-inositol 2-(L-cysteinylamino)-2-deoxy-alpha-D-glucopyranoside is bound by residues E145, R185, and E198. Residues 202–204 (LGV) and 209–215 (HCKGLGK) contribute to the acetyl-CoA site. Y236 serves as a coordination point for 1D-myo-inositol 2-(L-cysteinylamino)-2-deoxy-alpha-D-glucopyranoside.

The protein belongs to the acetyltransferase family. MshD subfamily. Monomer.

It catalyses the reaction 1D-myo-inositol 2-(L-cysteinylamino)-2-deoxy-alpha-D-glucopyranoside + acetyl-CoA = mycothiol + CoA + H(+). Functionally, catalyzes the transfer of acetyl from acetyl-CoA to desacetylmycothiol (Cys-GlcN-Ins) to form mycothiol. This Segniliparus rotundus (strain ATCC BAA-972 / CDC 1076 / CIP 108378 / DSM 44985 / JCM 13578) protein is Mycothiol acetyltransferase.